A 167-amino-acid chain; its full sequence is Protein-export protein SecB (167 aa).

It belongs to the SecB family. Homotetramer, a dimer of dimers. One homotetramer interacts with 1 SecA dimer.

It localises to the cytoplasm. Functionally, one of the proteins required for the normal export of preproteins out of the cell cytoplasm. It is a molecular chaperone that binds to a subset of precursor proteins, maintaining them in a translocation-competent state. It also specifically binds to its receptor SecA. The sequence is that of Protein-export protein SecB from Wolbachia sp. subsp. Brugia malayi (strain TRS).